A 533-amino-acid polypeptide reads, in one-letter code: Probable RNA-binding protein 46 (533 aa).

3 consecutive RRM domains span residues 61–139 (CEVF…VSLD), 141–223 (CRLF…WADP), and 236–308 (KVLY…LAKP).

As to quaternary structure, interacts with YTHDC2, MEIOC, MOV10, CNOT6L, DDX4, UPF1 and PABPC1.

It is found in the cytoplasm. Essential for male and female fertility, playing a crucial role in regulating germ cell development by ensuring the proper progression of meiosis prophase I. Regulates mitotic-to-meiotic transition in spermatogenesis by forming a complex with MEIOC and YTHDC2 which recognizes and down-regulates mitotic transcripts for a successful meiotic entry. Required for normal synaptonemal complex formation during meiosis, binding meiotic cohesin subunit mRNAs containing GCCUAU/GUUCGA motifs in their 3'UTRs regions and positively regulating their translation. Required for spermatogonial differentiation in both developing and adult testis. In Homo sapiens (Human), this protein is Probable RNA-binding protein 46 (RBM46).